A 658-amino-acid polypeptide reads, in one-letter code: Threonine--tRNA ligase (658 aa).

Residues 1 to 64 enclose the TGS domain; the sequence is MSNTVSLQFP…GASGKLEIIT (64 aa). A catalytic region spans residues 246 to 548; that stretch reads DHRRLGREMD…LIENFAGHMP (303 aa). Zn(2+) contacts are provided by C343, H394, and H525.

Belongs to the class-II aminoacyl-tRNA synthetase family. As to quaternary structure, homodimer. The cofactor is Zn(2+).

The protein localises to the cytoplasm. It carries out the reaction tRNA(Thr) + L-threonine + ATP = L-threonyl-tRNA(Thr) + AMP + diphosphate + H(+). Catalyzes the attachment of threonine to tRNA(Thr) in a two-step reaction: L-threonine is first activated by ATP to form Thr-AMP and then transferred to the acceptor end of tRNA(Thr). Also edits incorrectly charged L-seryl-tRNA(Thr). In Brucella abortus (strain S19), this protein is Threonine--tRNA ligase.